The primary structure comprises 315 residues: D-alanine--D-alanine ligase B (315 aa).

One can recognise an ATP-grasp domain in the interval 109–309 (KKVAAAAGVV…FAELLSWMVE (201 aa)). 135-190 (PMKPPYVVKPVREGSSFGVVIVKEDQPHPPQVIGSADWKYGDEVMVEGYIAGRELT) is an ATP binding site. Positions 259, 276, and 278 each coordinate Mg(2+).

Belongs to the D-alanine--D-alanine ligase family. It depends on Mg(2+) as a cofactor. The cofactor is Mn(2+).

Its subcellular location is the cytoplasm. The catalysed reaction is 2 D-alanine + ATP = D-alanyl-D-alanine + ADP + phosphate + H(+). It functions in the pathway cell wall biogenesis; peptidoglycan biosynthesis. Cell wall formation. This chain is D-alanine--D-alanine ligase B, found in Brucella melitensis biotype 1 (strain ATCC 23456 / CCUG 17765 / NCTC 10094 / 16M).